The chain runs to 247 residues: Probable transcriptional regulatory protein HRM2_04000 (247 aa).

This sequence belongs to the TACO1 family.

The protein localises to the cytoplasm. The chain is Probable transcriptional regulatory protein HRM2_04000 from Desulforapulum autotrophicum (strain ATCC 43914 / DSM 3382 / VKM B-1955 / HRM2) (Desulfobacterium autotrophicum).